Consider the following 180-residue polypeptide: Stathmin-3 (180 aa).

S-palmitoyl cysteine attachment occurs at residues cysteine 22 and cysteine 24. The region spanning 38–180 (GDMEVKQLDK…NKEQREEMSG (143 aa)) is the SLD domain. Phosphoserine is present on residues serine 50, serine 60, serine 65, serine 68, serine 72, serine 73, and serine 81. The segment at 58 to 81 (LKSPSDLSPESPVLSSPPKRKDAS) is disordered. Over residues 60–74 (SPSDLSPESPVLSSP) the composition is skewed to low complexity. A coiled-coil region spans residues 75 to 179 (PKRKDASLEE…RNKEQREEMS (105 aa)).

It belongs to the stathmin family. As to quaternary structure, interacts with STAT3. Interacts with CLU (secreted form); this interaction may act as an important modulator during neuronal differentiation. In terms of processing, N-terminal palmitoylation promotes specific anchoring to the cytosolic leaflet of Golgi membranes and subsequent vesicular trafficking along dendrites and axons. Neuronal Stathmins are substrates for palmitoyltransferases ZDHHC3, ZDHHC7 and ZDHHC15. Neuron specific.

The protein localises to the golgi apparatus. Its subcellular location is the cell projection. The protein resides in the growth cone. It localises to the axon. It is found in the cytoplasm. The protein localises to the cytosol. Exhibits microtubule-destabilizing activity, which is antagonized by STAT3. The protein is Stathmin-3 (Stmn3) of Rattus norvegicus (Rat).